The primary structure comprises 462 residues: UDP-N-acetylmuramoylalanine--D-glutamate ligase (462 aa).

Gly109 to Thr115 provides a ligand contact to ATP.

Belongs to the MurCDEF family.

It is found in the cytoplasm. The catalysed reaction is UDP-N-acetyl-alpha-D-muramoyl-L-alanine + D-glutamate + ATP = UDP-N-acetyl-alpha-D-muramoyl-L-alanyl-D-glutamate + ADP + phosphate + H(+). Its pathway is cell wall biogenesis; peptidoglycan biosynthesis. Functionally, cell wall formation. Catalyzes the addition of glutamate to the nucleotide precursor UDP-N-acetylmuramoyl-L-alanine (UMA). The chain is UDP-N-acetylmuramoylalanine--D-glutamate ligase from Leptospira borgpetersenii serovar Hardjo-bovis (strain JB197).